A 231-amino-acid polypeptide reads, in one-letter code: Phosphatidylserine decarboxylase proenzyme (231 aa).

Serine 188 acts as the Schiff-base intermediate with substrate; via pyruvic acid in catalysis. A Pyruvic acid (Ser); by autocatalysis modification is found at serine 188.

The protein belongs to the phosphatidylserine decarboxylase family. PSD-A subfamily. Heterodimer of a large membrane-associated beta subunit and a small pyruvoyl-containing alpha subunit. Pyruvate serves as cofactor. Is synthesized initially as an inactive proenzyme. Formation of the active enzyme involves a self-maturation process in which the active site pyruvoyl group is generated from an internal serine residue via an autocatalytic post-translational modification. Two non-identical subunits are generated from the proenzyme in this reaction, and the pyruvate is formed at the N-terminus of the alpha chain, which is derived from the carboxyl end of the proenzyme. The post-translation cleavage follows an unusual pathway, termed non-hydrolytic serinolysis, in which the side chain hydroxyl group of the serine supplies its oxygen atom to form the C-terminus of the beta chain, while the remainder of the serine residue undergoes an oxidative deamination to produce ammonia and the pyruvoyl prosthetic group on the alpha chain.

It localises to the cell membrane. The catalysed reaction is a 1,2-diacyl-sn-glycero-3-phospho-L-serine + H(+) = a 1,2-diacyl-sn-glycero-3-phosphoethanolamine + CO2. Its pathway is phospholipid metabolism; phosphatidylethanolamine biosynthesis; phosphatidylethanolamine from CDP-diacylglycerol: step 2/2. Functionally, catalyzes the formation of phosphatidylethanolamine (PtdEtn) from phosphatidylserine (PtdSer). This is Phosphatidylserine decarboxylase proenzyme from Rickettsia rickettsii (strain Iowa).